We begin with the raw amino-acid sequence, 53 residues long: MPQMAPINWLILFFIFSITLVIFNILNYFCFSYTPMKTSQSLNIKFNKLNWKW.

A helical transmembrane segment spans residues 9-29; it reads WLILFFIFSITLVIFNILNYF.

Belongs to the ATPase protein 8 family. In terms of assembly, F-type ATPases have 2 components, CF(1) - the catalytic core - and CF(0) - the membrane proton channel.

Its subcellular location is the mitochondrion membrane. Its function is as follows. Mitochondrial membrane ATP synthase (F(1)F(0) ATP synthase or Complex V) produces ATP from ADP in the presence of a proton gradient across the membrane which is generated by electron transport complexes of the respiratory chain. F-type ATPases consist of two structural domains, F(1) - containing the extramembraneous catalytic core and F(0) - containing the membrane proton channel, linked together by a central stalk and a peripheral stalk. During catalysis, ATP synthesis in the catalytic domain of F(1) is coupled via a rotary mechanism of the central stalk subunits to proton translocation. Part of the complex F(0) domain. Minor subunit located with subunit a in the membrane. This chain is ATP synthase protein 8 (mt:ATPase8), found in Anopheles quadrimaculatus (Common malaria mosquito).